We begin with the raw amino-acid sequence, 305 residues long: Heme A synthase (305 aa).

The Cytoplasmic portion of the chain corresponds to 1-6 (MKKFLK). A helical transmembrane segment spans residues 7–27 (VWSVLTIICMTVVVFGGALVT). The Extracellular segment spans residues 28–63 (KTGSADGCGNSWPLCNGQLVRLTDVTPEKLIEFMHR). Cys-35 and Cys-42 form a disulfide bridge. Residue Glu-59 is part of the active site. His-62 serves as a coordination point for heme o. A helical membrane pass occupies residues 64 to 84 (MTTGISSIFVIVLAICAWIYM). The Cytoplasmic segment spans residues 85 to 92 (KNRRETKP). A helical transmembrane segment spans residues 93-113 (LAIIAVLFLIIQALMGMAAVV). Over 114–122 (WGQNPYIMA) the chain is Extracellular. Residues 123–143 (LHFGISIICYASIVLLALMIF) form a helical membrane-spanning segment. His-124 is a binding site for heme o. Over 144-160 (EVDRKFDARNLVMGTKL) the chain is Cytoplasmic. The helical transmembrane segment at 161–181 (RVNIYALTIYTYLAVYTGALV) threads the bilayer. Topologically, residues 182–212 (RHEKASMAVPVWPFENGHFIMPTSVQDYVQY) are extracellular. The helical transmembrane segment at 213 to 233 (FHRLAAFILIVWLLYVTWLVF) threads the bilayer. Residue His-214 coordinates heme b. The Cytoplasmic portion of the chain corresponds to 234-240 (RDYRRYR). The chain crosses the membrane as a helical span at residues 241–261 (VLTFSMVLSLVFIALQAVTGA). Topologically, residues 262–271 (LSVYTGVNLY) are extracellular. Residues 272 to 292 (IALAHSLIITMLFALLCYLCL) form a helical membrane-spanning segment. His-276 is a binding site for heme b. The Cytoplasmic portion of the chain corresponds to 293–305 (LASRSKSNRLRIK).

Belongs to the COX15/CtaA family. Type 1 subfamily. Interacts with CtaB. Requires heme b as cofactor.

The protein localises to the cell membrane. The enzyme catalyses Fe(II)-heme o + 2 A + H2O = Fe(II)-heme a + 2 AH2. Its pathway is porphyrin-containing compound metabolism; heme A biosynthesis; heme A from heme O: step 1/1. Catalyzes the conversion of heme O to heme A by two successive hydroxylations of the methyl group at C8. The first hydroxylation forms heme I, the second hydroxylation results in an unstable dihydroxymethyl group, which spontaneously dehydrates, resulting in the formyl group of heme A. This Listeria monocytogenes serovar 1/2a (strain ATCC BAA-679 / EGD-e) protein is Heme A synthase.